Reading from the N-terminus, the 156-residue chain is Large ribosomal subunit protein uL22 (156 aa).

A disordered region spans residues 114 to 156 (VESRPKQEKGGKAGASKASSRAARAQGSKAAAAKKTESKGGTS). Low complexity predominate over residues 127–146 (GASKASSRAARAQGSKAAAA). Basic and acidic residues predominate over residues 147–156 (KKTESKGGTS).

Belongs to the universal ribosomal protein uL22 family. Part of the 50S ribosomal subunit.

In terms of biological role, this protein binds specifically to 23S rRNA; its binding is stimulated by other ribosomal proteins, e.g. L4, L17, and L20. It is important during the early stages of 50S assembly. It makes multiple contacts with different domains of the 23S rRNA in the assembled 50S subunit and ribosome. Functionally, the globular domain of the protein is located near the polypeptide exit tunnel on the outside of the subunit, while an extended beta-hairpin is found that lines the wall of the exit tunnel in the center of the 70S ribosome. The protein is Large ribosomal subunit protein uL22 of Mycobacteroides abscessus (strain ATCC 19977 / DSM 44196 / CCUG 20993 / CIP 104536 / JCM 13569 / NCTC 13031 / TMC 1543 / L948) (Mycobacterium abscessus).